Here is a 619-residue protein sequence, read N- to C-terminus: Phosphoenolpyruvate carboxykinase [GTP] (619 aa).

Substrate-binding positions include Arg-81 and 230 to 232; that span reads YGG. The Mn(2+) site is built by Lys-239 and His-259. Residue Ser-281 coordinates substrate. 282 to 287 is a binding site for GTP; sequence ACGKTN. Cys-283 is a catalytic residue. Position 306 (Asp-306) interacts with Mn(2+). 399–401 serves as a coordination point for substrate; sequence NSR. GTP is bound by residues Arg-401, Arg-432, and 525-528; that span reads YGQN.

This sequence belongs to the phosphoenolpyruvate carboxykinase [GTP] family. As to quaternary structure, monomer. Mn(2+) serves as cofactor.

It carries out the reaction oxaloacetate + GTP = phosphoenolpyruvate + GDP + CO2. In terms of biological role, in parasitic nematodes PEPCK carboxylates phosphoenolpyruvate to oxaloacetate thus introducing the products of glycolysis to mitochondrial metabolism. Its function is as follows. Catalyzes the conversion of oxaloacetate (OAA) to phosphoenolpyruvate (PEP), the rate-limiting step in the metabolic pathway that produces glucose from lactate and other precursors derived from the citric acid cycle. This Haemonchus contortus (Barber pole worm) protein is Phosphoenolpyruvate carboxykinase [GTP] (PEPCK).